Here is a 337-residue protein sequence, read N- to C-terminus: U11/U12 small nuclear ribonucleoprotein 48 kDa protein (337 aa).

The CHHC U11-48K-type zinc finger occupies 55–82 (IAICPYDSNHRMPKSSLTKHMESCRLRK). Zn(2+) is bound by residues cysteine 58, histidine 64, histidine 74, and cysteine 78. Glycyl lysine isopeptide (Lys-Gly) (interchain with G-Cter in SUMO2) cross-links involve residues lysine 87 and lysine 104. Residues 255–276 (HWQEEQGRAGDAAEKNEERRSA) show a composition bias toward basic and acidic residues. Residues 255-337 (HWQEEQGRAG…HSHKRRKQKI (83 aa)) are disordered. The span at 294–310 (RHRRARSRSPHKRKRNK) shows a compositional bias: basic residues. Positions 311 to 326 (DKSSESRRRKERDGER) are enriched in basic and acidic residues. A compositionally biased stretch (basic residues) spans 327–337 (HHSHKRRKQKI).

Component of the U11/U12 snRNPs that are part of the U12-type spliceosome. Not found in the major spliceosome.

The protein resides in the nucleus. In terms of biological role, likely involved in U12-type 5' splice site recognition. The protein is U11/U12 small nuclear ribonucleoprotein 48 kDa protein (Snrnp48) of Mus musculus (Mouse).